A 475-amino-acid polypeptide reads, in one-letter code: tRNA-2-methylthio-N(6)-dimethylallyladenosine synthase (475 aa).

The MTTase N-terminal domain maps to 3–120; the sequence is KKLHIKTWGC…LPEMIDQIKD (118 aa). Residues Cys-12, Cys-49, Cys-83, Cys-157, Cys-161, and Cys-164 each coordinate [4Fe-4S] cluster. A Radical SAM core domain is found at 143–375; sequence RAEGPSAFVS…QDRITQQAMR (233 aa). One can recognise a TRAM domain in the interval 378-441; sequence RQMVGTVQRI…TNSLRGVFIR (64 aa).

The protein belongs to the methylthiotransferase family. MiaB subfamily. In terms of assembly, monomer. [4Fe-4S] cluster serves as cofactor.

It is found in the cytoplasm. The enzyme catalyses N(6)-dimethylallyladenosine(37) in tRNA + (sulfur carrier)-SH + AH2 + 2 S-adenosyl-L-methionine = 2-methylsulfanyl-N(6)-dimethylallyladenosine(37) in tRNA + (sulfur carrier)-H + 5'-deoxyadenosine + L-methionine + A + S-adenosyl-L-homocysteine + 2 H(+). Catalyzes the methylthiolation of N6-(dimethylallyl)adenosine (i(6)A), leading to the formation of 2-methylthio-N6-(dimethylallyl)adenosine (ms(2)i(6)A) at position 37 in tRNAs that read codons beginning with uridine. This Shewanella pealeana (strain ATCC 700345 / ANG-SQ1) protein is tRNA-2-methylthio-N(6)-dimethylallyladenosine synthase.